Here is a 158-residue protein sequence, read N- to C-terminus: UPF0225 protein PSEEN1229 (158 aa).

The protein belongs to the UPF0225 family.

The sequence is that of UPF0225 protein PSEEN1229 from Pseudomonas entomophila (strain L48).